We begin with the raw amino-acid sequence, 180 residues long: MILNDKTIRKYISEGLLEINPLDDIQIQPSSVDLRLGNEFLIYPEDIEIIDVRDPYFSNRLIKEIATEEGFIIKPKQFVLATTIEYIKLPDFLTAFVEGRSSLGRLGLFIENAGWVDAGFEGNITLEFYNANSIPIKIYPGMRICQLVFAKMEDRSEKPYRGKYQGQRGTTASRIFLDRD.

DCTP contacts are provided by residues 100–105, aspartate 117, 125–127, glutamine 146, tyrosine 160, and glutamine 167; these read RSSLGR and TLE. Glutamate 127 serves as the catalytic Proton donor/acceptor.

This sequence belongs to the dCTP deaminase family. As to quaternary structure, homotrimer.

It catalyses the reaction dCTP + 2 H2O = dUMP + NH4(+) + diphosphate. It functions in the pathway pyrimidine metabolism; dUMP biosynthesis; dUMP from dCTP: step 1/1. Functionally, bifunctional enzyme that catalyzes both the deamination of dCTP to dUTP and the hydrolysis of dUTP to dUMP without releasing the toxic dUTP intermediate. The protein is dCTP deaminase, dUMP-forming of Sulfurihydrogenibium sp. (strain YO3AOP1).